We begin with the raw amino-acid sequence, 555 residues long: AP2-like ethylene-responsive transcription factor ANT (555 aa).

2 disordered regions span residues 34 to 56 (GGRE…SVPP) and 199 to 231 (LSMS…NHQQ). Low complexity-rich tracts occupy residues 41–53 (SSST…SSSS), 199–208 (LSMSPGSQSS), and 218–231 (QNQN…NHQQ). 2 DNA-binding regions (AP2/ERF) span residues 283-349 (QYRG…TNFS) and 385-443 (IYRG…TNFD).

The protein belongs to the AP2/ERF transcription factor family. AP2 subfamily. Interacts with ANL2, HDG2 and HDG10, and possibly with GL2, HDG3, HDG8, ATML1 and PDF2. Mostly expressed in developing flowers. Also present in mature flowers, siliques and seedlings, but not in mature roots, leaves and stems. Expressed in ovules and in vegetative and floral primordia.

The protein resides in the nucleus. Its function is as follows. Transcription activator that recognizes and binds to the DNA consensus sequence 5'-CAC[AG]N[AT]TNCCNANG-3'. Required for the initiation and growth of ovules integumenta, and for the development of female gametophyte. Plays a critical role in the development of gynoecium marginal tissues (e.g. stigma, style and septa), and in the fusion of carpels and of medial ridges leading to ovule primordia. Also involved in organs initiation and development, including floral organs. Maintains the meristematic competence of cells and consequently sustains expression of cell cycle regulators during organogenesis, thus controlling the final size of each organ by controlling their cell number. Regulates INO autoinduction and expression pattern. As ANT promotes petal cell identity and mediates down-regulation of AG in flower whorl 2, it functions as a class A homeotic gene. The chain is AP2-like ethylene-responsive transcription factor ANT from Arabidopsis thaliana (Mouse-ear cress).